Here is a 426-residue protein sequence, read N- to C-terminus: MFDRYDAGEQAVLVHIYFTQDKDMEDLQEFESLVSSAGVEALQVITGSRKAPHPKYFVGEGKAVEIAEAVKATGASVVLFDHALSPAQERNLERLCECRVIDRTGLILDIFAQRARTHEGKLQVELAQLRHLATRLVRGWTHLERQKGGIGLRGPGETQLETDRRLLRNRIVQIQSRLERVEKQREQGRQSRIKADVPTVSLVGYTNAGKSTLFNRITEARVYAADQLFATLDPTLRRIDVADVGETVLADTVGFIRHLPHDLVAAFKATLQETRQATLLLHVIDAADVRVQENIEAVNTVLEEIDAHEIPTLLVMNKIDMLEDFEPRIDRDEENKPNRVWLSAQTGAGIPQLFQALTERLSGEVAQHTLRLPPQEGRLRSRFYQLQAIEKEWMEEDGSVSLQVRMPIVDWRRLCKQEPALIDYLI.

The region spanning 198–365 (PTVSLVGYTN…ALTERLSGEV (168 aa)) is the Hflx-type G domain. Residues 204–211 (GYTNAGKS), 229–233 (FATLD), 251–254 (DTVG), 317–320 (NKID), and 343–345 (SAQ) contribute to the GTP site. Residues S211 and T231 each contribute to the Mg(2+) site.

Belongs to the TRAFAC class OBG-HflX-like GTPase superfamily. HflX GTPase family. Monomer. Associates with the 50S ribosomal subunit. This interaction occurs in the presence of GTP, GDP, ATP or ADP, but not in their absence. Mg(2+) serves as cofactor.

The protein localises to the cytoplasm. Intrinsic GTPase activity is very slow and can be stimulated by the presence of 50S ribosomal subunits or 70S ribosomes. GTPase activity is inhibited by ATP. Functionally, GTPase that associates with the 50S ribosomal subunit and may have a role during protein synthesis or ribosome biogenesis. In vitro, also exhibits ATPase activity. This chain is GTPase HflX, found in Escherichia coli (strain K12).